We begin with the raw amino-acid sequence, 75 residues long: Exodeoxyribonuclease 7 small subunit (75 aa).

The protein belongs to the XseB family. Heterooligomer composed of large and small subunits.

Its subcellular location is the cytoplasm. It catalyses the reaction Exonucleolytic cleavage in either 5'- to 3'- or 3'- to 5'-direction to yield nucleoside 5'-phosphates.. Bidirectionally degrades single-stranded DNA into large acid-insoluble oligonucleotides, which are then degraded further into small acid-soluble oligonucleotides. This is Exodeoxyribonuclease 7 small subunit from Geobacter sp. (strain M21).